The sequence spans 201 residues: MKVVILDTGCANLSSVTYAIRKLGYQPEISQETATILAADKLLLPGVGTASAAMDQLKQRELIPLIKVLSQPVLGICLGMQLFAATSEESDNVAGNNVTLLEVMASPVQKMATHGLPLPHMGWNQVLPKAGHPLFRGIEDHAYFYFVHSYAIPLNTYTIAQTEYGNIFSSAIAKDNFFGVQFHPERSGAAGARLLKNFLEM.

The region spanning 2-201 (KVVILDTGCA…ARLLKNFLEM (200 aa)) is the Glutamine amidotransferase type-1 domain. Cys77 functions as the Nucleophile in the catalytic mechanism. Residues His183 and Glu185 contribute to the active site.

As to quaternary structure, heterodimer of HisH and HisF.

It localises to the cytoplasm. It carries out the reaction 5-[(5-phospho-1-deoxy-D-ribulos-1-ylimino)methylamino]-1-(5-phospho-beta-D-ribosyl)imidazole-4-carboxamide + L-glutamine = D-erythro-1-(imidazol-4-yl)glycerol 3-phosphate + 5-amino-1-(5-phospho-beta-D-ribosyl)imidazole-4-carboxamide + L-glutamate + H(+). It catalyses the reaction L-glutamine + H2O = L-glutamate + NH4(+). It functions in the pathway amino-acid biosynthesis; L-histidine biosynthesis; L-histidine from 5-phospho-alpha-D-ribose 1-diphosphate: step 5/9. In terms of biological role, IGPS catalyzes the conversion of PRFAR and glutamine to IGP, AICAR and glutamate. The HisH subunit catalyzes the hydrolysis of glutamine to glutamate and ammonia as part of the synthesis of IGP and AICAR. The resulting ammonia molecule is channeled to the active site of HisF. The sequence is that of Imidazole glycerol phosphate synthase subunit HisH from Photorhabdus laumondii subsp. laumondii (strain DSM 15139 / CIP 105565 / TT01) (Photorhabdus luminescens subsp. laumondii).